A 91-amino-acid chain; its full sequence is Small ubiquitin-related modifier (91 aa).

The Ubiquitin-like domain occupies 13 to 91 (EYIKIKVVGQ…EVYQEQLGGF (79 aa)). G90 is covalently cross-linked (Glycyl lysine isopeptide (Gly-Lys) (interchain with K-? in acceptor proteins)). F91 is a propeptide.

This sequence belongs to the ubiquitin family. SUMO subfamily. Covalently attached to tbx-2. Covalently attached to lin-1. Covalently attached to lin-11. Covalently attached to sop-2. Covalently attached to bet-1. In terms of processing, cleavage of precursor form by ulp-1 is necessary for function.

It localises to the cytoplasm. Its subcellular location is the nucleus. The protein resides in the cytoskeleton. The protein localises to the spindle. It is found in the chromosome. It localises to the microtubule organizing center. Its subcellular location is the centrosome. Functionally, ubiquitin-like protein which can be covalently attached to target lysines as a monomer. Does not seem to be involved in protein degradation and may function as an antagonist of ubiquitin in the degradation process. Plays a role in a number of cellular processes such as nuclear transport, DNA replication and repair, mitosis and signal transduction. Covalent attachment to its substrates requires prior activation by the E1 complex aos-1-uba-2 and linkage to the E2 enzyme ubc-9, and can be promoted by an E3 ligase such as gei-17. Required for embryonic development, fertility, vulval morphogenesis and inhibition of vulval cell fates. Probably by sumoylating bet-1, prevents muscle myosin depletion in aging adults probably by preventing myoblast growth factor receptor egl-15 overexpression. Plays a role in the attenuation of the let-60/ras pathway. Plays a role in male tail tip morphogenesis. Plays a role in the mitochondrial stress response with its covalent attachment to transcription factors dve-1 and afts-1 negatively regulating the mitochondrial unfolded protein response. The sequence is that of Small ubiquitin-related modifier from Caenorhabditis elegans.